A 54-amino-acid polypeptide reads, in one-letter code: Secreted virulence factor MC69 (54 aa).

The N-terminal stretch at 1–18 (MKFTLALLTTLCASLASA) is a signal peptide. Cysteine 38 and cysteine 48 form a disulfide bridge.

The protein belongs to the MC69 virulence factor family.

Its subcellular location is the secreted. Its function is as follows. Secreted protein required for appressorial penetration of intact host epidermal cells and for pathogenicity. The chain is Secreted virulence factor MC69 from Colletotrichum orbiculare (strain 104-T / ATCC 96160 / CBS 514.97 / LARS 414 / MAFF 240422) (Cucumber anthracnose fungus).